The primary structure comprises 615 residues: 9-cis-epoxycarotenoid dioxygenase NCED1, chloroplastic (615 aa).

Residues 1–41 (MPSPASNTWINTTLPSSCSSPFKDLASTSSSPTTLLPFKKR) constitute a chloroplast transit peptide. Disordered stretches follow at residues 20–45 (SPFK…SSSN) and 62–101 (YQPT…KQPF). Low complexity-rich tracts occupy residues 27 to 37 (STSSSPTTLLP) and 64 to 86 (PTST…TTTT). Residues H316, H365, and H430 each contribute to the Fe cation site. The stretch at 571–592 (KEWKSELQIVNAQNLKLEASIK) forms a coiled coil. Residue H602 coordinates Fe cation.

The protein belongs to the carotenoid oxygenase family. Requires Fe(2+) as cofactor.

It is found in the plastid. The protein localises to the chloroplast thylakoid membrane. The catalysed reaction is a 9-cis-epoxycarotenoid + O2 = a 12'-apo-carotenal + 2-cis,4-trans-xanthoxin. It carries out the reaction 9-cis-violaxanthin + O2 = (3S,5R,6S)-5,6-epoxy-3-hydroxy-5,6-dihydro-12'-apo-beta-caroten-12'-al + 2-cis,4-trans-xanthoxin. It catalyses the reaction 9'-cis-neoxanthin + O2 = (3S,5R,6R)-3,5-dihydroxy-6,7-didehydro-5,6-dihydro-12'-apo-beta-caroten-12'-al + 2-cis,4-trans-xanthoxin. Functionally, has a 11,12(11',12') 9-cis epoxycarotenoid cleavage activity. Catalyzes the first step of abscisic-acid biosynthesis from carotenoids, in response to water stress. Active on 9-cis-violaxanthin and 9'-cis-neoxanthin, but not on the all-trans isomers of violaxanthin and neoxanthin. The protein is 9-cis-epoxycarotenoid dioxygenase NCED1, chloroplastic (NCED1) of Phaseolus vulgaris (Kidney bean).